The chain runs to 211 residues: Thymidylate kinase (211 aa).

Position 11–18 (glycine 11–threonine 18) interacts with ATP.

This sequence belongs to the thymidylate kinase family.

The catalysed reaction is dTMP + ATP = dTDP + ADP. Phosphorylation of dTMP to form dTDP in both de novo and salvage pathways of dTTP synthesis. This is Thymidylate kinase from Streptococcus uberis (strain ATCC BAA-854 / 0140J).